The chain runs to 505 residues: MVSIRPDEISSILKKQIADYDKSVSVSNVGTVLQIGDGIARVYGLEKAMAGELVEFEDGTEGIALNLEDDNVGAVLMGEGLGIQEGSTVKATGKIASVPVGDAMLGRVVNPLGQPVDGNGEIATSDSRLIESLAPGIIKRKSVHEPMQTGITSIDAMIPIGRGQRELIIGDRQTGKTAIAIDTIINQKGQDVVCVYVAVGQKSASVAQVVEVLREKGALEYTIVVNASASEAAALQYLAPYTGAAIAEHFMYQGKATLVIYDDLTKQAQAYRQMSLLLRRPPGREAYPGDVFYCHSRLLERAAKLSDAMGSGSMTALPIIETQAGDVSAYIPTNVISITDGQIFLSADLFNSGLRPAINVGISVSRVGGAAQTKAIKKIAGTLKLELAQFDELAAFSQFASDLDEATQQQLERGKRLRELLKQAQFAPLNLAEQVAVVYAGVKGLIDEVPVEQVTQFAAELREYLKTSKPDYINQVLTEKKLSDDIEAVLKESINEVKSSMLAAA.

Residue 170-177 (GDRQTGKT) participates in ATP binding.

Belongs to the ATPase alpha/beta chains family. As to quaternary structure, F-type ATPases have 2 components, CF(1) - the catalytic core - and CF(0) - the membrane proton channel. CF(1) has five subunits: alpha(3), beta(3), gamma(1), delta(1), epsilon(1). CF(0) has four main subunits: a(1), b(1), b'(1) and c(9-12).

Its subcellular location is the cellular thylakoid membrane. It carries out the reaction ATP + H2O + 4 H(+)(in) = ADP + phosphate + 5 H(+)(out). In terms of biological role, produces ATP from ADP in the presence of a proton gradient across the membrane. The alpha chain is a regulatory subunit. This Prochlorococcus marinus (strain SARG / CCMP1375 / SS120) protein is ATP synthase subunit alpha.